The primary structure comprises 714 residues: MSWVRSVAIRTALCRQVRSRYQSYGSTRLFSSSLRSWEEPEVVTKTPKADIDHEAVKAHQESSPLKSIEVPFTSLEASRKFDKSIFRGLYNSKMKNMTVVQQRAIMPMMDTKTGVVVRAKTGTGKTLAFALPCIQAALENPQQTQKGRIQALVVAPTRDLALQIEAEFKKVLQHQTRNVHRKTDTFVLIGGRKNDLHPKAKAAIVIATPGRLEAILRDPRMLPMFSDLKYRVYDEADRLLDQGFAPTLEVIEERLRDAKAEALEPDNHFKTALFSATVDDAVTNFAHETIGKEYEYINCVDKDAEESHENIHQGIVRTQSIKDSFEASFSYILNHINDKYFKAIVFLPTITGTEYYYRVLQRAKREELYDSETATKKYGSRILRLHGKMSQSARDRTVKEFRRTSHGVLVCTDVAARGLDFNDVSHVIQMCPSSSVADYIHKIGRTARAGARGKARIFISEPEMKFIETLQRERGIVFKEDTEYVKDETSPDHFQRLGSYEQDALEEFLRTFLGFAASVSGVYRFNKQRIVEESFALYRHILNDPSAKLSVGRRFVSEVLRMPGRDAAEFFDVPGGFDMRSSNDRKSKRTFMGDGGSRSDRGFSNDRYGNSGRSYNKSRSFDRNDRSYGNDRSYSNDRKSYGNKSYGDKSYGNKAYGDKSYGDKSYGDKSYGKSYGNRSNDRSFSRGNDRGGYEKRNYGSQSRNTYGRRDDSDE.

Residues 1-37 constitute a mitochondrion transit peptide; sequence MSWVRSVAIRTALCRQVRSRYQSYGSTRLFSSSLRSW. The Q motif motif lies at 74–102; it reads SLEASRKFDKSIFRGLYNSKMKNMTVVQQ. One can recognise a Helicase ATP-binding domain in the interval 106 to 296; it reads MPMMDTKTGV…HETIGKEYEY (191 aa). Position 119-126 (119-126) interacts with ATP; it reads AKTGTGKT. Residues 234 to 237 carry the DEAD box motif; it reads DEAD. In terms of domain architecture, Helicase C-terminal spans 335–498; sequence HINDKYFKAI…TSPDHFQRLG (164 aa). Residues 581 to 714 are disordered; the sequence is SSNDRKSKRT…TYGRRDDSDE (134 aa). Composition is skewed to basic and acidic residues over residues 619–640, 656–671, and 679–697; these read RSFD…DRKS, YGDK…DKSY, and SNDR…EKRN.

The protein belongs to the DEAD box helicase family. DDX18/HAS1 subfamily.

Its subcellular location is the mitochondrion matrix. It catalyses the reaction ATP + H2O = ADP + phosphate + H(+). In terms of biological role, ATP-dependent RNA helicase required for mitochondrial splicing of group I and II introns. Also required for efficient mitochondrial translation. This Meyerozyma guilliermondii (strain ATCC 6260 / CBS 566 / DSM 6381 / JCM 1539 / NBRC 10279 / NRRL Y-324) (Yeast) protein is ATP-dependent RNA helicase MSS116, mitochondrial (MSS116).